The primary structure comprises 61 residues: Small ribosomal subunit protein uS14 (61 aa).

Residues Cys24, Cys27, Cys40, and Cys43 each coordinate Zn(2+).

The protein belongs to the universal ribosomal protein uS14 family. Zinc-binding uS14 subfamily. As to quaternary structure, part of the 30S ribosomal subunit. Contacts proteins S3 and S10. The cofactor is Zn(2+).

In terms of biological role, binds 16S rRNA, required for the assembly of 30S particles and may also be responsible for determining the conformation of the 16S rRNA at the A site. This Geotalea daltonii (strain DSM 22248 / JCM 15807 / FRC-32) (Geobacter daltonii) protein is Small ribosomal subunit protein uS14.